Reading from the N-terminus, the 216-residue chain is Endo-1,4-beta-xylanase 2 (216 aa).

The signal sequence occupies residues 1 to 27 (MVSFSSLFVAACAAVTAFALPNELEKR). The GH11 domain occupies 28–216 (AITSNEQGTN…SSGSASITVS (189 aa)). N-linked (GlcNAc...) asparagine glycosylation occurs at asparagine 87. Glutamate 112 acts as the Nucleophile in catalysis. Glutamate 203 acts as the Proton donor in catalysis.

This sequence belongs to the glycosyl hydrolase 11 (cellulase G) family.

Its subcellular location is the secreted. The enzyme catalyses Endohydrolysis of (1-&gt;4)-beta-D-xylosidic linkages in xylans.. It functions in the pathway glycan degradation; xylan degradation. In terms of biological role, endo-1,4-beta-xylanase involved in the hydrolysis of xylan, a major structural heterogeneous polysaccharide found in plant biomass representing the second most abundant polysaccharide in the biosphere, after cellulose. This is Endo-1,4-beta-xylanase 2 (xyn2) from Rhizopus oryzae (Mucormycosis agent).